Reading from the N-terminus, the 371-residue chain is Bifunctional enzyme IspD/IspF (371 aa).

Positions 1-210 (MSEISLIMLA…LDLPKPSFEI (210 aa)) are 2-C-methyl-D-erythritol 4-phosphate cytidylyltransferase. The 2-C-methyl-D-erythritol 2,4-cyclodiphosphate synthase stretch occupies residues 211–371 (FTGNGFDVHE…NLKYFDWTRL (161 aa)). Positions 217 and 219 each coordinate a divalent metal cation. 4-CDP-2-C-methyl-D-erythritol 2-phosphate-binding positions include 217 to 219 (DVH) and 243 to 244 (HS). Histidine 251 is an a divalent metal cation binding site. 4-CDP-2-C-methyl-D-erythritol 2-phosphate-binding positions include 265–267 (DIG), 270–274 (YPDTD), 341–344 (TTTE), phenylalanine 348, and arginine 351.

In the N-terminal section; belongs to the IspD/TarI cytidylyltransferase family. IspD subfamily. The protein in the C-terminal section; belongs to the IspF family. It depends on a divalent metal cation as a cofactor.

The enzyme catalyses 2-C-methyl-D-erythritol 4-phosphate + CTP + H(+) = 4-CDP-2-C-methyl-D-erythritol + diphosphate. It catalyses the reaction 4-CDP-2-C-methyl-D-erythritol 2-phosphate = 2-C-methyl-D-erythritol 2,4-cyclic diphosphate + CMP. The protein operates within isoprenoid biosynthesis; isopentenyl diphosphate biosynthesis via DXP pathway; isopentenyl diphosphate from 1-deoxy-D-xylulose 5-phosphate: step 2/6. It participates in isoprenoid biosynthesis; isopentenyl diphosphate biosynthesis via DXP pathway; isopentenyl diphosphate from 1-deoxy-D-xylulose 5-phosphate: step 4/6. Bifunctional enzyme that catalyzes the formation of 4-diphosphocytidyl-2-C-methyl-D-erythritol from CTP and 2-C-methyl-D-erythritol 4-phosphate (MEP) (IspD), and catalyzes the conversion of 4-diphosphocytidyl-2-C-methyl-D-erythritol 2-phosphate (CDP-ME2P) to 2-C-methyl-D-erythritol 2,4-cyclodiphosphate (ME-CPP) with a corresponding release of cytidine 5-monophosphate (CMP) (IspF). The chain is Bifunctional enzyme IspD/IspF from Campylobacter jejuni subsp. doylei (strain ATCC BAA-1458 / RM4099 / 269.97).